The following is a 157-amino-acid chain: MPSVESFELDHTIVKAPYVRHCGVHNVGSDGIVNKFDIRFCQPNKQAMKPDVIHTLEHLLAFNLRKYIDRYPHFDIIDISPMGCQTGYYLVVSGTPTVREIIDLLELTLKDAVQITEIPAANETQCGQAKLHDLEGAKRLMNFWLSQDKDELEKVFG.

Positions 54, 58, and 126 each coordinate Fe cation.

Belongs to the LuxS family. Homodimer. Requires Fe cation as cofactor.

The enzyme catalyses S-(5-deoxy-D-ribos-5-yl)-L-homocysteine = (S)-4,5-dihydroxypentane-2,3-dione + L-homocysteine. Its function is as follows. Involved in the synthesis of autoinducer 2 (AI-2) which is secreted by bacteria and is used to communicate both the cell density and the metabolic potential of the environment. The regulation of gene expression in response to changes in cell density is called quorum sensing. Catalyzes the transformation of S-ribosylhomocysteine (RHC) to homocysteine (HC) and 4,5-dihydroxy-2,3-pentadione (DPD). This Bacillus anthracis (strain A0248) protein is S-ribosylhomocysteine lyase.